A 210-amino-acid chain; its full sequence is NADH dehydrogenase [ubiquinone] iron-sulfur protein 8, mitochondrial (210 aa).

A mitochondrion-targeting transit peptide spans Met-1–Ala-34. 4Fe-4S ferredoxin-type domains are found at residues Arg-102 to Glu-131 and Thr-141 to Asn-170. The [4Fe-4S] cluster site is built by Cys-111, Cys-114, Cys-117, Cys-121, Cys-150, Cys-153, Cys-156, and Cys-160.

It belongs to the complex I 23 kDa subunit family. In terms of assembly, core subunit of respiratory chain NADH dehydrogenase (Complex I) which is composed of 45 different subunits. This is a component of the iron-sulfur (IP) fragment of the enzyme. Interacts with RAB5IF. [4Fe-4S] cluster serves as cofactor.

It is found in the mitochondrion inner membrane. The enzyme catalyses a ubiquinone + NADH + 5 H(+)(in) = a ubiquinol + NAD(+) + 4 H(+)(out). In terms of biological role, core subunit of the mitochondrial membrane respiratory chain NADH dehydrogenase (Complex I) which catalyzes electron transfer from NADH through the respiratory chain, using ubiquinone as an electron acceptor. Essential for the catalytic activity and assembly of complex I. This chain is NADH dehydrogenase [ubiquinone] iron-sulfur protein 8, mitochondrial (NDUFS8), found in Pongo abelii (Sumatran orangutan).